The chain runs to 837 residues: Striatin-interacting protein 1 (837 aa).

Position 1 is an N-acetylmethionine (Met-1). Disordered stretches follow at residues 1–66 (MEPA…SESP) and 333–423 (AASP…KGLP). Pro residues predominate over residues 18 to 35 (PQPPPPPPPATAQPPPGA). A compositionally biased stretch (basic and acidic residues) spans 47–60 (KAREFNRNQRKDSE). A phosphoserine mark is found at Ser-59, Ser-335, and Ser-339. Residues 356–377 (KALIKQDNLDAFNERDPYKADD) are compositionally biased toward basic and acidic residues. Over residues 378–391 (SREEEEENDDDNSL) the composition is skewed to acidic residues. Phosphoserine is present on Ser-788. Residues 796-837 (DNCLQSVLGQRVDLPEDFQMNYDLWLEREVFSKPISWEELLQ) are required for STRIPAK core complex formation.

Belongs to the STRIP family. In terms of assembly, part of the core of STRIPAK complexes composed of PP2A catalytic and scaffolding subunits, the striatins (PP2A regulatory subunits), the striatin-associated proteins MOB4, STRIP1 and STRIP2, PDCD10 and members of the STE20 kinases, such as STK24 and STK26. The STRIPAK complex can be extended by adapter proteins such as SLMAP:SIKE1, CTTNBP2 or CTTNBP2NL. Interacts with CDC42BPB. Interacts with CTTNBP2NL.

The protein localises to the cytoplasm. Plays a role in the regulation of cell morphology and cytoskeletal organization. Required in the cortical actin filament dynamics and cell shape. Part of the striatin-interacting phosphatase and kinase (STRIPAK) complexes. STRIPAK complexes have critical roles in protein (de)phosphorylation and are regulators of multiple signaling pathways including Hippo, MAPK, nuclear receptor and cytoskeleton remodeling. Different types of STRIPAK complexes are involved in a variety of biological processes such as cell growth, differentiation, apoptosis, metabolism and immune regulation. This chain is Striatin-interacting protein 1 (STRIP1), found in Macaca fascicularis (Crab-eating macaque).